The primary structure comprises 607 residues: Large ribosomal subunit assembly factor BipA (607 aa).

Residues 3–198 (ENLRNIAIIA…AIVDHVPAPD (196 aa)) enclose the tr-type G domain. GTP-binding positions include 15-20 (DHGKTT) and 128-131 (NKVD). The interval 481-607 (GQRQNGVLIS…RRANRGQKEE (127 aa)) is C-terminal domain (CTD), required but not sufficient to bind 70S or 30S ribosomes.

This sequence belongs to the TRAFAC class translation factor GTPase superfamily. Classic translation factor GTPase family. BipA subfamily. Monomer.

It is found in the cytoplasm. It carries out the reaction GTP + H2O = GDP + phosphate + H(+). Its activity is regulated as follows. Ribosome-associated GTPase is not affected by low levels of ppGpp, &gt;40 uM ppGpp and &gt;50 uM GDP inhibit GTPase. The C-terminus (residues 387-607 or 481-607) inhibits GTPase activity, in its absence kcat increases, but GTPase is no longer stimulated by 70S ribosome or 30S or 50S subunits. Its function is as follows. A 50S ribosomal subunit assembly protein with GTPase activity, required for 50S subunit assembly at low temperatures, may also play a role in translation. Binds GTP and analogs. Binds the 70S ribosome between the 30S and 50S subunits, in a similar position as ribosome-bound EF-G; it contacts a number of ribosomal proteins, both rRNAs and the A-site tRNA. A ribosome-stimulated GTPase, GTPase activity increases 4 fold in the presence of 70S ribosomes. Binds 70S ribosomes in the presence of GTP or its non-hydrolyzable analog GMPPNP; in the presence of ppGpp or under stress conditions it binds to 30S ribosomal subunits. The polypeptide is Large ribosomal subunit assembly factor BipA (Salmonella typhimurium (strain LT2 / SGSC1412 / ATCC 700720)).